The primary structure comprises 191 residues: Thymidine kinase (191 aa).

ATP-binding positions include 9-16 (GTMNSGKT) and 85-88 (DEAQ). The Proton acceptor role is filled by glutamate 86. Zn(2+) is bound by residues cysteine 143, cysteine 146, cysteine 180, and histidine 183.

It belongs to the thymidine kinase family. As to quaternary structure, homotetramer.

Its subcellular location is the cytoplasm. It catalyses the reaction thymidine + ATP = dTMP + ADP + H(+). The chain is Thymidine kinase from Streptococcus gordonii (strain Challis / ATCC 35105 / BCRC 15272 / CH1 / DL1 / V288).